Here is a 330-residue protein sequence, read N- to C-terminus: D-cysteine desulfhydrase (330 aa).

K52 bears the N6-(pyridoxal phosphate)lysine mark.

It belongs to the ACC deaminase/D-cysteine desulfhydrase family. Homodimer. The cofactor is pyridoxal 5'-phosphate.

It carries out the reaction D-cysteine + H2O = hydrogen sulfide + pyruvate + NH4(+) + H(+). Its function is as follows. Catalyzes the alpha,beta-elimination reaction of D-cysteine and of several D-cysteine derivatives. It could be a defense mechanism against D-cysteine. This Yersinia pestis protein is D-cysteine desulfhydrase.